The sequence spans 129 residues: Chorion class A protein L11 (129 aa).

The first 21 residues, 1–21, serve as a signal peptide directing secretion; the sequence is MSTFAFLLLCVQACLIQNVYG. The segment at 22-64 is left arm; that stretch reads QCLGRGLGGCGCGGGLGGYGLGYGLGGYGGGYGYGGYGGGYYG. The tract at residues 65 to 112 is central domain; sequence GYGGEGVGNVGVAGVLPVGGVTAVGGRVPIIGGVEFGGPACAGGCVSI. The tract at residues 113–129 is right arm; it reads CGHCAPTCGCGYGGLYY.

The protein belongs to the chorion protein family.

Functionally, this protein is one of many from the eggshell of the silk moth. The chain is Chorion class A protein L11 from Bombyx mori (Silk moth).